We begin with the raw amino-acid sequence, 265 residues long: Undecaprenyl-diphosphatase (265 aa).

The next 8 membrane-spanning stretches (helical) occupy residues 1–21, 40–60, 87–107, 113–133, 151–173, 188–208, 214–234, and 244–264; these read MDWL…FLPI, GLAF…LAFH, WAVI…ENVI, ASLV…WADV, IIGF…TITA, SFLL…VELI, VAWG…WLCI, and IGML…LVWV.

This sequence belongs to the UppP family.

It localises to the cell inner membrane. It carries out the reaction di-trans,octa-cis-undecaprenyl diphosphate + H2O = di-trans,octa-cis-undecaprenyl phosphate + phosphate + H(+). Functionally, catalyzes the dephosphorylation of undecaprenyl diphosphate (UPP). Confers resistance to bacitracin. In Chromohalobacter salexigens (strain ATCC BAA-138 / DSM 3043 / CIP 106854 / NCIMB 13768 / 1H11), this protein is Undecaprenyl-diphosphatase.